Here is an 87-residue protein sequence, read N- to C-terminus: Small cysteine-rich outer membrane protein omcA (87 aa).

The first 19 residues, 1-19 (MKKAVLLATVFCGVVGLTS), serve as a signal peptide directing secretion. Cysteine 20 carries the N-palmitoyl cysteine lipid modification. Cysteine 20 is lipidated: S-diacylglycerol cysteine.

As to quaternary structure, part of a disulfide cross-linked outer membrane complex (COMC) composed of the major outer membrane porin (MOMP), the small cysteine-rich protein (omcA) and the large cysteine-rich periplasmic protein (omcB). N-terminal amide-linked and S-diacylglycerol cysteine-linked to 16:0, 18:0, 15:0 branched, and 17:0 branched fatty acids (ratio 6:5:3:4) in the EB stage. The exact distribution of fatty acids has not been determined. In terms of processing, the N-terminus is blocked.

The protein localises to the cell outer membrane. In terms of biological role, in elementary bodies (EBs, the infectious stage, which is able to survive outside the host cell) provides the structural integrity of the outer envelope through disulfide cross-links with the large cysteine-rich periplasmic protein and the major outer membrane porin. It has been described in publications as the Sarkosyl-insoluble COMC (Chlamydia outer membrane complex), and serves as the functional equivalent of peptidoglycan. The polypeptide is Small cysteine-rich outer membrane protein omcA (omcA) (Chlamydia psittaci (Chlamydophila psittaci)).